Here is a 98-residue protein sequence, read N- to C-terminus: Small ribosomal subunit protein bS6c (98 aa).

Belongs to the bacterial ribosomal protein bS6 family.

The protein resides in the plastid. It localises to the chloroplast. Binds together with bS18 to 16S ribosomal RNA. The chain is Small ribosomal subunit protein bS6c from Phaeodactylum tricornutum (strain CCAP 1055/1).